Consider the following 417-residue polypeptide: Gamma-glutamyl phosphate reductase (417 aa).

It belongs to the gamma-glutamyl phosphate reductase family.

Its subcellular location is the cytoplasm. It carries out the reaction L-glutamate 5-semialdehyde + phosphate + NADP(+) = L-glutamyl 5-phosphate + NADPH + H(+). It functions in the pathway amino-acid biosynthesis; L-proline biosynthesis; L-glutamate 5-semialdehyde from L-glutamate: step 2/2. Functionally, catalyzes the NADPH-dependent reduction of L-glutamate 5-phosphate into L-glutamate 5-semialdehyde and phosphate. The product spontaneously undergoes cyclization to form 1-pyrroline-5-carboxylate. This is Gamma-glutamyl phosphate reductase from Serratia marcescens.